Here is a 91-residue protein sequence, read N- to C-terminus: Small ribosomal subunit protein uS19 (91 aa).

This sequence belongs to the universal ribosomal protein uS19 family.

Protein S19 forms a complex with S13 that binds strongly to the 16S ribosomal RNA. This is Small ribosomal subunit protein uS19 from Methylibium petroleiphilum (strain ATCC BAA-1232 / LMG 22953 / PM1).